We begin with the raw amino-acid sequence, 312 residues long: tRNA pseudouridine synthase B (312 aa).

Residue aspartate 37 is the Nucleophile of the active site.

It belongs to the pseudouridine synthase TruB family. Type 1 subfamily.

The catalysed reaction is uridine(55) in tRNA = pseudouridine(55) in tRNA. Responsible for synthesis of pseudouridine from uracil-55 in the psi GC loop of transfer RNAs. The sequence is that of tRNA pseudouridine synthase B from Deinococcus geothermalis (strain DSM 11300 / CIP 105573 / AG-3a).